We begin with the raw amino-acid sequence, 635 residues long: Voltage-gated potassium channel KCNC4 (635 aa).

A disordered region spans residues 1–24 (MISSVCVSSYRGRKSGNKPPSKTC). An inactivation gate region spans residues 1 to 28 (MISSVCVSSYRGRKSGNKPPSKTCLKEE). At 1–226 (MISSVCVSSY…EDPYSSRAAR (226 aa)) the chain is on the cytoplasmic side. Residues Ser-8, Ser-9, Ser-15, and Ser-21 each carry the phosphoserine modification. Positions 116, 122, 143, and 144 each coordinate Zn(2+). Positions 160–180 (IFESPDGGGSGAGPSDEAGDD) are disordered. The chain crosses the membrane as a helical span at residues 227-247 (VVAFASLFFILVSITTFCLET). N-linked (GlcNAc...) asparagine glycans are attached at residues Asn-256 and Asn-265. A helical transmembrane segment spans residues 278 to 298 (EPILTYIEGVCVLWFTLEFLV). Residues 299–312 (RIVCCPDTLDFVKN) lie on the Cytoplasmic side of the membrane. Residues 313-333 (LLNIIDFVAILPFYLEVGLSG) form a helical membrane-spanning segment. A helical; Voltage-sensor transmembrane segment spans residues 345–364 (FLRVVRFVRILRIFKLTRHF). The Cytoplasmic segment spans residues 365–380 (VGLRVLGHTLRASTNE). A helical membrane pass occupies residues 381 to 401 (FLLLIIFLALGVLIFATMIYY). The K(+) site is built by Thr-436, Leu-437, Gly-438, and Tyr-439. The short motif at 436–441 (TLGYGD) is the Selectivity filter element. The chain crosses the membrane as a helical span at residues 452 to 472 (VGALCALAGVLTIAMPVPVIV). Residues 473-635 (NNFGMYYSLA…PTAGTLFLPH (163 aa)) lie on the Cytoplasmic side of the membrane. The disordered stretch occupies residues 490-580 (KKRKKHVPRP…RRALRRSTTR (91 aa)). Positions 527-542 (AREEGMIERKRADSKQ) are enriched in basic and acidic residues.

This sequence belongs to the potassium channel family. C (Shaw) (TC 1.A.1.2) subfamily. Kv3.4/KCNC4 sub-subfamily. Homotetramer. Heterotetramer of potassium channel proteins. Phosphorylation of serine residues in the inactivation gate inhibits rapid channel closure.

It is found in the membrane. The catalysed reaction is K(+)(in) = K(+)(out). Its function is as follows. Voltage-gated potassium channel that opens in response to the voltage difference across the membrane, forming a potassium-selective channel through which potassium ions pass in accordance with their electrochemical gradient. The channel displays rapid activation and inactivation kinetics. The polypeptide is Voltage-gated potassium channel KCNC4 (Homo sapiens (Human)).